Consider the following 291-residue polypeptide: Beta-lactamase CTX-M-4 (291 aa).

An N-terminal signal peptide occupies residues 1 to 28; sequence MMTQSIRRSMLTVMATLPLLFSSATLHA. The Acyl-ester intermediate role is filled by S73. Residue 237–239 coordinates substrate; sequence KTG.

This sequence belongs to the class-A beta-lactamase family.

It carries out the reaction a beta-lactam + H2O = a substituted beta-amino acid. Functionally, has cefotaxime-hydrolyzing activity. The chain is Beta-lactamase CTX-M-4 (bla) from Salmonella typhimurium.